Consider the following 360-residue polypeptide: DNA replication and repair protein RecF (360 aa).

30–37 lines the ATP pocket; that stretch reads GHNGSGKT.

Belongs to the RecF family.

The protein resides in the cytoplasm. Its function is as follows. The RecF protein is involved in DNA metabolism; it is required for DNA replication and normal SOS inducibility. RecF binds preferentially to single-stranded, linear DNA. It also seems to bind ATP. This is DNA replication and repair protein RecF from Haemophilus ducreyi (strain 35000HP / ATCC 700724).